The chain runs to 320 residues: SUN domain-containing protein 3 (320 aa).

Residues 1–6 (MLTRSW) lie on the Nuclear side of the membrane. The helical transmembrane segment at 7 to 29 (KIILSTVFISTFLLVGLLNHQWL) threads the bilayer. At 30–320 (KETEFPQKPR…RVHGIPSDYT (291 aa)) the chain is on the perinuclear space side. Positions 63–102 (KEQQELLKKESQTLENNFREILFLIEQIDVLKALLKDMKD) form a coiled coil. Residues 156 to 317 (GASVIEAGTS…YRFRVHGIPS (162 aa)) enclose the SUN domain.

Self-associates. Interacts with SYNE1 and SPAG4/SUN4. Proposed to form a spermatogenesis-specific LINC complex with SYNE1 during sperm head formation possibly implicating a SUN domain-based heterotrimer with SPAG4/SUN4 associating with SYNE1. Can interact with SYNE3; the interaction is questioned by missing colocalization in spermatids. As to expression, specifically expressed in testis (at protein level).

The protein localises to the membrane. The protein resides in the nucleus envelope. It is found in the nucleus inner membrane. Its function is as follows. As a probable component of the LINC (LInker of Nucleoskeleton and Cytoskeleton) complex, involved in the connection between the nuclear lamina and the cytoskeleton. The nucleocytoplasmic interactions established by the LINC complex play an important role in the transmission of mechanical forces across the nuclear envelope and in nuclear movement and positioning. May be involved in nuclear remodeling during sperm head formation in spermatogenesis. A probable SUN3:SYNE1 LINC complex may tether spermatid nuclei to posterior cytoskeletal structures such as the manchette. The protein is SUN domain-containing protein 3 (Sun3) of Mus musculus (Mouse).